Consider the following 275-residue polypeptide: MYLRRALIAGGSAAAAILGVVAAGKSKGGSDSEILSVAPPATGQWDRNWDRREPISMVNLSKINAETGEEELQLHLNKHKPKATRHIFLIRHSQYKLDGKTDFDRVLTPLGREQADLTGQRLASLGHKYNHIVYSTMTRAKETTEIISKYLPDVNKSSSDLLREGAPIRPEPQVCHWKPDFVYYEDGPRIEAAFRHFIHRADPKQEEDSYEILICHANVIRYVVCRALQFPPEAWLRISLNNGSITYLVIRPNGNVSIRMLGDSGFMPAEKISRT.

Residues 7–24 (LIAGGSAAAAILGVVAAG) form a helical membrane-spanning segment.

The protein belongs to the phosphoglycerate mutase family. BPG-dependent PGAM subfamily. Phosphorylated by the RIPK1/RIPK3 complex under necrotic conditions. This phosphorylation increases PGAM5 phosphatase activity.

Its subcellular location is the mitochondrion outer membrane. It catalyses the reaction O-phospho-L-seryl-[protein] + H2O = L-seryl-[protein] + phosphate. It carries out the reaction O-phospho-L-threonyl-[protein] + H2O = L-threonyl-[protein] + phosphate. Functionally, displays phosphatase activity for serine/threonine residues. Has apparently no phosphoglycerate mutase activity. May be regulator of mitochondrial dynamics. May be a central mediator for programmed necrosis. The sequence is that of Serine/threonine-protein phosphatase PGAM5, mitochondrial (pgam5) from Xenopus laevis (African clawed frog).